The following is a 185-amino-acid chain: Ribosome-recycling factor (185 aa).

This sequence belongs to the RRF family.

The protein localises to the cytoplasm. Responsible for the release of ribosomes from messenger RNA at the termination of protein biosynthesis. May increase the efficiency of translation by recycling ribosomes from one round of translation to another. In Thermosipho africanus (strain TCF52B), this protein is Ribosome-recycling factor.